A 403-amino-acid polypeptide reads, in one-letter code: Poly(rC)-binding protein 4 (403 aa).

KH domains are found at residues 17–67 (TLTL…TITG), 101–154 (PVTL…TVSG), and 241–293 (TSSQ…TITG).

As to expression, widely expressed, with highest levels in testis and lowest in heart.

Its subcellular location is the cytoplasm. Its function is as follows. Single-stranded nucleic acid binding protein that binds preferentially to oligo dC. This chain is Poly(rC)-binding protein 4 (Pcbp4), found in Mus musculus (Mouse).